The following is a 236-amino-acid chain: DNA repair protein RecO (236 aa).

This sequence belongs to the RecO family.

In terms of biological role, involved in DNA repair and RecF pathway recombination. This Haemophilus influenzae (strain 86-028NP) protein is DNA repair protein RecO.